The primary structure comprises 20 residues: Cytochrome P450-RR1 (20 aa).

The protein belongs to the cytochrome P450 family. The cofactor is heme.

Functionally, P450-RRI catalyzes the O-dealkylation of 2-ethoxyphenol and 2-methoxyphenol to produce catechol. The cytochrome binds other ortho-substituted phenols, including 2-ethoxyphenol, 2-methylphenol and 2-chlorophenol. The sequence is that of Cytochrome P450-RR1 from Rhodococcus rhodochrous.